The chain runs to 100 residues: Small ribosomal subunit protein uS14c (100 aa).

It belongs to the universal ribosomal protein uS14 family. Part of the 30S ribosomal subunit.

Its subcellular location is the plastid. It is found in the chloroplast. Its function is as follows. Binds 16S rRNA, required for the assembly of 30S particles. In Cycas taitungensis (Prince sago), this protein is Small ribosomal subunit protein uS14c.